A 197-amino-acid polypeptide reads, in one-letter code: GTP cyclohydrolase 1 (197 aa).

Zn(2+)-binding residues include C85, H88, and C156.

This sequence belongs to the GTP cyclohydrolase I family. In terms of assembly, toroid-shaped homodecamer, composed of two pentamers of five dimers.

It catalyses the reaction GTP + H2O = 7,8-dihydroneopterin 3'-triphosphate + formate + H(+). Its pathway is cofactor biosynthesis; 7,8-dihydroneopterin triphosphate biosynthesis; 7,8-dihydroneopterin triphosphate from GTP: step 1/1. This chain is GTP cyclohydrolase 1, found in Mesorhizobium japonicum (strain LMG 29417 / CECT 9101 / MAFF 303099) (Mesorhizobium loti (strain MAFF 303099)).